Here is a 1158-residue protein sequence, read N- to C-terminus: Transient receptor potential cation channel subfamily M member 5 (1158 aa).

The Cytoplasmic segment spans residues 1–729; that stretch reads MQTTQSSCPG…LTRWRKFWGA (729 aa). At S129 the chain carries Phosphoserine; by PKC. Ca(2+) is bound by residues C341, D350, D353, and E354. Residues 488 to 507 form a disordered region; it reads GRRMEERGPPKRPAGQKWLP. Residues 552 to 572 adopt a coiled-coil conformation; sequence KIIKEMSHLEKEAEVARTMRE. A helical membrane pass occupies residues 730–754; that stretch reads PVTVFLGNVVMYFAFLFLFTYVLLV. The Extracellular segment spans residues 755-764; the sequence is DFRPPPQGPS. A helical membrane pass occupies residues 765 to 784; it reads GSEVTLYFWVFTLVLEEIRQ. E781 and Q784 together coordinate Ca(2+). The Cytoplasmic portion of the chain corresponds to 785 to 805; that stretch reads GFFTDEDTHLVKKFTLYVEDN. Residues 806-824 traverse the membrane as a helical segment; that stretch reads WNKCDMVAIFLFIVGVTCR. Ca(2+) is bound by residues N807 and D810. Topologically, residues 825-831 are extracellular; the sequence is MVPSVFE. The chain crosses the membrane as a helical span at residues 832-854; the sequence is AGRTVLAIDFMVFTLRLIHIFAI. The Cytoplasmic segment spans residues 855–863; the sequence is HKQLGPKII. Residues 864–893 form a helical membrane-spanning segment; the sequence is IVERMMKDVFFFLFFLSVWLVAYGVTTQAL. Topologically, residues 894-902 are extracellular; the sequence is LHPHDGRLE. The pore-forming intramembrane region spans 903 to 938; it reads WIFRRVLYRPYLQIFGQIPLDEIDEARVNCSLHPLL. The short motif at 917–919 is the Selectivity filter element; it reads FGQ. The Extracellular segment spans residues 939–950; that stretch reads LESSASCPNLYA. Residues 951–985 traverse the membrane as a helical segment; sequence NWLVILLLVTFLLVTNVLLMNLLIAMFSYTFQVVQ. At 986–1158 the chain is on the cytoplasmic side; it reads GNADMFWKFQ…LESGLPPSDT (173 aa). Residue E1002 coordinates Ca(2+). Polar residues predominate over residues 1127-1141; it reads TYSSSQNCGCRSQPA. Positions 1127-1158 are disordered; sequence TYSSSQNCGCRSQPASARDREYLESGLPPSDT.

This sequence belongs to the transient receptor (TC 1.A.4) family. LTrpC subfamily. TRPM5 sub-subfamily. In terms of assembly, homotetramer. In terms of processing, multiple phosphorylation sites regulate the Gq/ TRPM5 modulation axis, with the Ser-129 playing a substantial role in this positive modulation. In terms of tissue distribution, strongly expressed in liver, heart, testis, brain and kidney. Detected in fetal liver, kidney, spleen, brain, heart and lung, and in adult skin, eyes, spleen, stomach, small intestine, colon, lung, bladder, pancreas and thymus. Biallelically expressed at all stages and tissues examined. Also expressed in subsets of taste receptor cells of the tongue, in olfactory sensory neurons of the main olfactory epithelium and in the vomeronasal organ.

It is found in the cell membrane. It carries out the reaction Na(+)(in) = Na(+)(out). It catalyses the reaction K(+)(in) = K(+)(out). With respect to regulation, ca(2+)-activated cation channel. Displays voltage dependence modulation. Regulated by PI(4,5)P2 levels. PI(4,5)P 2 reverses the Ca(2+) -induced desensitization of channels. Inhibited by flufenamic acid with an IC(50) of 24.5 uM and spermine with an IC(50) of 37 uM. Is a highly temperature-sensitive, heat activated channel showing a steep increase of inward currents at temperatures between 15 and 35 degrees Celsius. Heat activation is due to a shift of the voltage-dependent activation curve to negative potentials. The channel is blocked by extracellular acidification. Monovalent cation-selective ion channel activated by intracellular Ca(2+) in a voltage- and temperature-dependent manner. Mediates the transport of Na(+), K(+) and Cs(+) ions equally well. Activated directly by increase in intracellular Ca(2+), but is impermeable to it. The activation mechanism of TRPM5 involves a multistep process. TRPM5 activation involves ligand binding (i.e., tastant molecule, glucose stimulation) to Gq/G-protein coupled receptors (GPCR) and leads to the breakdown of phosphatidylinositol bisphosphate (PIP2) into diacylglycerol (DAG) and inositol trisphosphate (IP3), IP3 binds to its receptors in the endoplasmic reticulum and cause Ca(2+) release. Simultaneously with the intracellular Ca(2+) release, DAG activates the protein kinase C (PKC), which phosphorylates the TRPM5 channel. This phosphorylation combined with the bound Ca(2+), leads to a robust inward current allowing the entry of sodium ions (Na+) into the cell. This ion influx depolarizes the cell membrane, generating action potentials that propagate TRPM5 signals. Is a key player in sensing sweet, umami and bitter stimuli. May also be involved in sensing semiochemicals. Involved in insulin secretion by pancreatic beta cells. The chain is Transient receptor potential cation channel subfamily M member 5 from Mus musculus (Mouse).